Reading from the N-terminus, the 275-residue chain is NH(3)-dependent NAD(+) synthetase (275 aa).

47 to 54 (GISGGQDS) is an ATP binding site. Aspartate 53 serves as a coordination point for Mg(2+). Arginine 141 provides a ligand contact to deamido-NAD(+). Threonine 161 contacts ATP. Position 166 (glutamate 166) interacts with Mg(2+). Residues lysine 174 and aspartate 181 each coordinate deamido-NAD(+). Positions 190 and 212 each coordinate ATP. 261 to 262 (HK) is a binding site for deamido-NAD(+).

Belongs to the NAD synthetase family. Homodimer.

It catalyses the reaction deamido-NAD(+) + NH4(+) + ATP = AMP + diphosphate + NAD(+) + H(+). Its pathway is cofactor biosynthesis; NAD(+) biosynthesis; NAD(+) from deamido-NAD(+) (ammonia route): step 1/1. Functionally, catalyzes the ATP-dependent amidation of deamido-NAD to form NAD. Uses ammonia as a nitrogen source. The protein is NH(3)-dependent NAD(+) synthetase of Enterococcus faecalis (strain ATCC 700802 / V583).